The chain runs to 843 residues: Protein P (843 aa).

The segment at 1–177 is terminal protein domain (TP); sequence MPLSYQHFRK…FCGSPYSWEQ (177 aa). Positions 178 to 346 are spacer; it reads ELQHGRLVFQ…YCLTHIVNLL (169 aa). Disordered stretches follow at residues 224 to 273 and 288 to 316; these read GLQP…SSTS and HLSTSKRQSSSGHAVELHNIPPSSARSQS. The span at 288-299 shows a compositional bias: polar residues; the sequence is HLSTSKRQSSSG. Residues 347–690 form a polymerase/reverse transcriptase domain (RT) region; sequence EDWGPCTEHG…YLNLYPVARQ (344 aa). In terms of domain architecture, Reverse transcriptase spans 357 to 600; that stretch reads EHNIRIPRTP…YSLNFMGYVI (244 aa). 3 residues coordinate Mg(2+): Asp-429, Asp-551, and Asp-552.

This sequence belongs to the hepadnaviridae P protein family.

It catalyses the reaction DNA(n) + a 2'-deoxyribonucleoside 5'-triphosphate = DNA(n+1) + diphosphate. It carries out the reaction Endonucleolytic cleavage to 5'-phosphomonoester.. Its activity is regulated as follows. Activated by host HSP70 and HSP40 in vitro to be able to bind the epsilon loop of the pgRNA. Because deletion of the RNase H region renders the protein partly chaperone-independent, the chaperones may be needed indirectly to relieve occlusion of the RNA-binding site by this domain. Inhibited by several reverse-transcriptase inhibitors: Lamivudine, Adefovir and Entecavir. Functionally, multifunctional enzyme that converts the viral RNA genome into dsDNA in viral cytoplasmic capsids. This enzyme displays a DNA polymerase activity that can copy either DNA or RNA templates, and a ribonuclease H (RNase H) activity that cleaves the RNA strand of RNA-DNA heteroduplexes in a partially processive 3'- to 5'-endonucleasic mode. Neo-synthesized pregenomic RNA (pgRNA) are encapsidated together with the P protein, and reverse-transcribed inside the nucleocapsid. Initiation of reverse-transcription occurs first by binding the epsilon loop on the pgRNA genome, and is initiated by protein priming, thereby the 5'-end of (-)DNA is covalently linked to P protein. Partial (+)DNA is synthesized from the (-)DNA template and generates the relaxed circular DNA (RC-DNA) genome. After budding and infection, the RC-DNA migrates in the nucleus, and is converted into a plasmid-like covalently closed circular DNA (cccDNA). The activity of P protein does not seem to be necessary for cccDNA generation, and is presumably released from (+)DNA by host nuclear DNA repair machinery. The chain is Protein P from Homo sapiens (Human).